Reading from the N-terminus, the 671-residue chain is DNA ligase (671 aa).

NAD(+)-binding positions include 32-36, 81-82, and Glu-113; these read DAEYD and SL. Lys-115 serves as the catalytic N6-AMP-lysine intermediate. The NAD(+) site is built by Arg-136, Glu-173, Lys-290, and Lys-314. Residues Cys-408, Cys-411, Cys-426, and Cys-432 each contribute to the Zn(2+) site. The 79-residue stretch at 593-671 folds into the BRCT domain; that stretch reads EIDSPFAGKT…EAEMIRLLDA (79 aa).

This sequence belongs to the NAD-dependent DNA ligase family. LigA subfamily. The cofactor is Mg(2+). Mn(2+) is required as a cofactor.

The catalysed reaction is NAD(+) + (deoxyribonucleotide)n-3'-hydroxyl + 5'-phospho-(deoxyribonucleotide)m = (deoxyribonucleotide)n+m + AMP + beta-nicotinamide D-nucleotide.. In terms of biological role, DNA ligase that catalyzes the formation of phosphodiester linkages between 5'-phosphoryl and 3'-hydroxyl groups in double-stranded DNA using NAD as a coenzyme and as the energy source for the reaction. It is essential for DNA replication and repair of damaged DNA. The polypeptide is DNA ligase (Salmonella schwarzengrund (strain CVM19633)).